Consider the following 152-residue polypeptide: Superoxide dismutase [Cu-Zn] 1 (152 aa).

The Cu cation site is built by His45, His47, and His62. Cys56 and Cys145 are joined by a disulfide. His62, His70, His79, and Asp82 together coordinate Zn(2+). His119 lines the Cu cation pocket.

This sequence belongs to the Cu-Zn superoxide dismutase family. Homodimer. Cu cation is required as a cofactor. Zn(2+) serves as cofactor.

The protein localises to the cytoplasm. The enzyme catalyses 2 superoxide + 2 H(+) = H2O2 + O2. Its function is as follows. Destroys radicals which are normally produced within the cells and which are toxic to biological systems. The polypeptide is Superoxide dismutase [Cu-Zn] 1 (SODCC.1) (Mesembryanthemum crystallinum (Common ice plant)).